An 866-amino-acid chain; its full sequence is Rifampicin phosphotransferase (866 aa).

Residues 1-313 (MSSLVLGLHE…FYIVQSRPIT (313 aa)) are ATP-binding. ATP is bound by residues lysine 22, arginine 116, glycine 131, threonine 135, glutamine 182, glutamate 296, glutamine 308, and arginine 310. The rifampicin-binding stretch occupies residues 326–754 (NHVYISVGHQ…TSDGEIVTGE (429 aa)). The interval 410–429 (IPNDKTAPNPSRGNADMPAQ) is disordered. Positions 767–865 (GLPVSSGVIE…VHGTEGYIEI (99 aa)) are swivel phosphohistidine. Histidine 825 functions as the Tele-phosphohistidine intermediate in the catalytic mechanism.

The protein belongs to the rifampicin phosphotransferase family.

It catalyses the reaction rifampicin + ATP + H2O = 21-phosphorifampicin + AMP + phosphate + 2 H(+). Its function is as follows. Catalyzes the phosphorylation of rifampicin, also known as rifampin (RIF), leading to its inactivation. The chain is Rifampicin phosphotransferase from Bacillus subtilis (strain 168).